The following is a 268-amino-acid chain: F-actin-capping protein subunit alpha (268 aa).

Position 2 is an N-acetylserine (Ser2). The residue at position 17 (Ser17) is a Phosphoserine.

This sequence belongs to the F-actin-capping protein alpha subunit family. As to quaternary structure, component of the F-actin capping complex, composed of a heterodimer of an alpha and a beta subunit. Interacts with BSP1 (via C-terminus); leading to recruitment of the F-actin capping complex to actin cortical patches and the acomyosin contractile ring.

Its subcellular location is the cytoplasm. The protein resides in the cytoskeleton. It is found in the actin patch. F-actin-capping proteins bind in a Ca(2+)-independent manner to the fast growing ends of actin filaments (barbed end) thereby blocking the exchange of subunits at these ends. Unlike other capping proteins (such as gelsolin and severin), these proteins do not sever actin filaments. The sequence is that of F-actin-capping protein subunit alpha (CAP1) from Saccharomyces cerevisiae (strain ATCC 204508 / S288c) (Baker's yeast).